Reading from the N-terminus, the 357-residue chain is mRNA endoribonuclease toxin LS (357 aa).

As to quaternary structure, forms homodimer in solution. Forms a complex with cognate antitoxin RnlB and with enterobacteria phage T4 antitoxin Dmd.

It localises to the cytoplasm. Functionally, toxic component of a type II toxin-antitoxin (TA) system. A stable (half-life 27.6 minutes) endoribonuclease that in the absence of cognate antitoxin RnlB causes generalized RNA degradation. Degrades late enterobacteria phage T4 mRNAs, protecting the host against T4 reproduction. Activity is inhibited by cognate antitoxin RnlB and by enterobacteria phage T4 protein Dmd. Targets cyaA mRNA. This Escherichia coli (strain K12) protein is mRNA endoribonuclease toxin LS (rnlA).